A 314-amino-acid polypeptide reads, in one-letter code: uncharacterized protein (314 aa).

A mitochondrion-targeting transit peptide spans 1-29; the sequence is MMRLIRTLPLRCFKTRIRRQGSLLCLRCF. Positions 52–74 are disordered; it reads SSSPLSKNKEKQEKPEKENEGKH. The segment covering 58–74 has biased composition (basic and acidic residues); it reads KNKEKQEKPEKENEGKH. Residues 177 to 207 are a coiled coil; sequence LNEHHLQLLKLKRELNSIHDELNEIIIDLLQ. The helical transmembrane segment at 262–279 threads the bilayer; sequence GLLVILVLVCSIMIGVSA. Residues 281–314 are disordered; the sequence is KKERPGLQEPEEPEILAPKEDIDTTFPQDQHDID.

It is found in the mitochondrion membrane. This is an uncharacterized protein from Saccharomyces cerevisiae (strain ATCC 204508 / S288c) (Baker's yeast).